The sequence spans 137 residues: Keratin-associated protein 15-1 (137 aa).

This sequence belongs to the PMG family. Interacts with hair keratins.

In terms of biological role, in the hair cortex, hair keratin intermediate filaments are embedded in an interfilamentous matrix, consisting of hair keratin-associated proteins (KRTAP), which are essential for the formation of a rigid and resistant hair shaft through their extensive disulfide bond cross-linking with abundant cysteine residues of hair keratins. The matrix proteins include the high-sulfur and high-glycine-tyrosine keratins. This is Keratin-associated protein 15-1 (KRTAP15-1) from Homo sapiens (Human).